A 560-amino-acid chain; its full sequence is Thermosome subunit 1 (560 aa).

Residues 525–550 (LSGGQTGSDDDDGGAPGGMGGGMGGM) form a disordered region. Residues 538–550 (GAPGGMGGGMGGM) show a composition bias toward gly residues.

Belongs to the TCP-1 chaperonin family. The thermosome or CCT complex is a oligomeric complex of two octameric double-ring structures; the complex is probably a heterooligomer of CCT1, CCT2 and CCT3 with yet unknown stoichiometry.

In terms of biological role, molecular chaperone that assists in the folding or refolding of nascent or denatured proteins along with ATP hydrolysis. ATPase activity is highest in thermosome assemblies containing CCT1:CCT2, followed by assemblies containing CCT1:CCT2:CCT3. Required for thermosome ATPase activity. Not required for growth. This chain is Thermosome subunit 1 (cct1), found in Haloferax volcanii (strain ATCC 29605 / DSM 3757 / JCM 8879 / NBRC 14742 / NCIMB 2012 / VKM B-1768 / DS2) (Halobacterium volcanii).